A 2724-amino-acid polypeptide reads, in one-letter code: Eukaryotic translation initiation factor 2-alpha kinase 2 (2724 aa).

Topologically, residues 1-24 (MLNMVDQKKGINNGSSTGVINNIN) are cytoplasmic. A helical transmembrane segment spans residues 25–45 (GKIKNEFIFMYLIAAGGFSCV). Over 46 to 673 (YKIKKKKSNK…KFYIKRHNQK (628 aa)) the chain is Extracellular. The tract at residues 112-153 (KRERRGRRKEQQREQMGDKRREKRQQQRREKRKEQNTNTKKR) is disordered. The segment covering 120–146 (KEQQREQMGDKRREKRQQQRREKRKEQ) has biased composition (basic and acidic residues). Residues 674 to 694 (TYFFENIIFYHYIIMLFLDIE) traverse the membrane as a helical segment. Topologically, residues 695 to 718 (KYKNKFVSLFQYNLYRKLLKISKR) are cytoplasmic. Residues 719–739 (IVLMLHRIETNVICIFLLKHF) traverse the membrane as a helical segment. Residues 740 to 800 (EDYFIRKGIH…KKNIFNFFIE (61 aa)) lie on the Extracellular side of the membrane. A helical membrane pass occupies residues 801 to 821 (LFLNNIQINIFKKFEILYLII). Topologically, residues 822–832 (YFYNYFEKSKQ) are cytoplasmic. The chain crosses the membrane as a helical span at residues 833–853 (FDIEGIGDIIYVWLSLINLFY). Residues 854–876 (DDKGKCIKILSKIFAKLNKKLYY) are Extracellular-facing. Residues 877–897 (VYWGKLYIIMNWTTIVDTIFI) form a helical membrane-spanning segment. Residues 898–908 (RNVLSINREGN) lie on the Cytoplasmic side of the membrane. Residues 909–929 (YYWVIIVLKMINYFVNVAYTL) form a helical membrane-spanning segment. Over 930-996 (TRMDIFFIKV…KKNYDIYTKY (67 aa)) the chain is Extracellular. The chain crosses the membrane as a helical span at residues 997–1017 (AILFIYCFIIQAYYFDTLFNI). The Cytoplasmic portion of the chain corresponds to 1018 to 2724 (RSLESNEIAN…GDIFLPDKCP (1707 aa)). Lys-2029 is a binding site for ATP. The region spanning 2084–2719 (KHYFTKCGIL…KIISAGDIFL (636 aa)) is the Protein kinase domain. Positions 2120-2155 (INTLNEENQNMFCKNKEKKEENYKKIDTNISQFSEK) form a coiled coil. The active-site Proton acceptor is Asp-2229. The disordered stretch occupies residues 2479 to 2507 (EKMDKNKIAAQKKKKKKENKHPIGRRSTN). The segment covering 2488–2502 (AQKKKKKKENKHPIG) has biased composition (basic residues).

It belongs to the protein kinase superfamily. Ser/Thr protein kinase family. GCN2 subfamily. Auto-phosphorylated.

The protein resides in the membrane. It catalyses the reaction L-seryl-[protein] + ATP = O-phospho-L-seryl-[protein] + ADP + H(+). The enzyme catalyses L-threonyl-[protein] + ATP = O-phospho-L-threonyl-[protein] + ADP + H(+). Phosphorylates translation factor eIF2alpha in salivary gland sporozoites during dormancy, which leads to an inhibition of protein translation and accumulation of stalled mRNAs into granules. The sequence is that of Eukaryotic translation initiation factor 2-alpha kinase 2 from Plasmodium berghei (strain Anka).